A 433-amino-acid chain; its full sequence is Transcription factor TCP18 (433 aa).

Disordered stretches follow at residues glutamine 130–aspartate 163 and aspartate 247–isoleucine 281. The 59-residue stretch at arginine 148 to isoleucine 206 folds into the TCP domain. In terms of domain architecture, R spans lysine 287–lysine 304.

In terms of tissue distribution, expressed in unelongated axillary buds, and, to a lower extent, in axillary structures such as flowers and siliques.

It is found in the nucleus. In terms of biological role, transcription factor that prevents axillary bud outgrowth and delays early axillary bud development. Indirectly required for the auxin-induced control of apical dominance. The protein is Transcription factor TCP18 of Arabidopsis thaliana (Mouse-ear cress).